We begin with the raw amino-acid sequence, 21 residues long: 78 kDa dihydrolipoyllysine-residue acetyltransferase component of pyruvate dehydrogenase complex (21 aa).

Belongs to the 2-oxoacid dehydrogenase family. Forms a 60-polypeptide structural core. It depends on (R)-lipoate as a cofactor.

It is found in the mitochondrion matrix. The catalysed reaction is N(6)-[(R)-dihydrolipoyl]-L-lysyl-[protein] + acetyl-CoA = N(6)-[(R)-S(8)-acetyldihydrolipoyl]-L-lysyl-[protein] + CoA. In terms of biological role, the pyruvate dehydrogenase complex catalyzes the overall conversion of pyruvate to acetyl-CoA and CO(2). It contains multiple copies of three enzymatic components: pyruvate dehydrogenase (E1), dihydrolipoamide acetyltransferase (E2) and lipoamide dehydrogenase (E3). This is 78 kDa dihydrolipoyllysine-residue acetyltransferase component of pyruvate dehydrogenase complex from Solanum tuberosum (Potato).